Consider the following 313-residue polypeptide: MKETVISIVGPTAVGKSLLGIEMAKRFNGEVISGDSTQVYKGMDIGTAKVTKEEMDGIMHHMIDIISPDESFSVADFQLHAKKCIDDVLGRGKLPILVGGSGLYIQAVLYNYNFSEQRRDESFTKKLEEIIEEEGPNQLYTRLKEVDPVQAAKVHPNNHRRLIRALEVYETTGMTMTEYQQQQQLESPYHLILIGLDMDRDVLYDRINQRVDHMIDTGLIEEVRDLIDRGYENCQSMHAIGYKEIIQHISGNQPMEYAIDALKQHSRKYAKRQLTWFRNKMNVQWYKMEPSIIDEKIEFILNDLAGILEEKSN.

10–17 (GPTAVGKS) provides a ligand contact to ATP. 12-17 (TAVGKS) is a binding site for substrate. The segment at 35-38 (DSTQ) is interaction with substrate tRNA.

Belongs to the IPP transferase family. As to quaternary structure, monomer. Requires Mg(2+) as cofactor.

It carries out the reaction adenosine(37) in tRNA + dimethylallyl diphosphate = N(6)-dimethylallyladenosine(37) in tRNA + diphosphate. Catalyzes the transfer of a dimethylallyl group onto the adenine at position 37 in tRNAs that read codons beginning with uridine, leading to the formation of N6-(dimethylallyl)adenosine (i(6)A). In Oceanobacillus iheyensis (strain DSM 14371 / CIP 107618 / JCM 11309 / KCTC 3954 / HTE831), this protein is tRNA dimethylallyltransferase.